The primary structure comprises 358 residues: Neutral protease 2 homolog MGYG_02351 (358 aa).

The first 17 residues, Met1–Ala17, serve as a signal peptide directing secretion. The propeptide occupies Ala18–Arg183. Disulfide bonds link Cys191/Cys260 and Cys267/Cys285. His309 is a Zn(2+) binding site. The active site involves Glu310. Zn(2+) contacts are provided by His313 and Asp324.

Belongs to the peptidase M35 family. Zn(2+) is required as a cofactor.

The protein localises to the secreted. It carries out the reaction Preferential cleavage of bonds with hydrophobic residues in P1'. Also 3-Asn-|-Gln-4 and 8-Gly-|-Ser-9 bonds in insulin B chain.. Its function is as follows. Secreted metalloproteinase that allows assimilation of proteinaceous substrates. Shows high activities on basic nuclear substrates such as histone and protamine. May be involved in virulence. This is Neutral protease 2 homolog MGYG_02351 from Arthroderma gypseum (strain ATCC MYA-4604 / CBS 118893) (Microsporum gypseum).